Here is an 800-residue protein sequence, read N- to C-terminus: Nucleolar complex protein 3 homolog (800 aa).

Basic residues-rich tracts occupy residues 1–19 (MGPA…RKLL) and 42–53 (KKQRKEQRKLHK). 2 disordered regions span residues 1–91 (MGPA…TDMM) and 167–197 (KPVL…SAPL). The span at 65–74 (PLERYKKRPE) shows a compositional bias: basic and acidic residues. Residues 449-490 (SFKEKRKNLSRMQRKWKKAEEKLQKELLEAEATESKEKKIKL) adopt a coiled-coil conformation. The tract at residues 780–800 (LQEEPEQMSLDFTSPHTQQEP) is disordered. Positions 789–800 (LDFTSPHTQQEP) are enriched in polar residues.

It belongs to the CBF/MAK21 family.

Its subcellular location is the nucleus. The protein localises to the nucleolus. This chain is Nucleolar complex protein 3 homolog (noc3l), found in Danio rerio (Zebrafish).